A 336-amino-acid chain; its full sequence is Phenylalanine--tRNA ligase alpha subunit (336 aa).

Residue Glu259 participates in Mg(2+) binding.

This sequence belongs to the class-II aminoacyl-tRNA synthetase family. Phe-tRNA synthetase alpha subunit type 1 subfamily. In terms of assembly, tetramer of two alpha and two beta subunits. Requires Mg(2+) as cofactor.

It is found in the cytoplasm. It catalyses the reaction tRNA(Phe) + L-phenylalanine + ATP = L-phenylalanyl-tRNA(Phe) + AMP + diphosphate + H(+). This Tropheryma whipplei (strain TW08/27) (Whipple's bacillus) protein is Phenylalanine--tRNA ligase alpha subunit.